Here is a 423-residue protein sequence, read N- to C-terminus: Polyglutamylase complex subunit TTLL1 (423 aa).

In terms of domain architecture, TTL spans Met-1–Asn-367. ATP is bound by residues Lys-138, Gln-144 to Gly-145, Ser-181 to Ile-184, and Lys-194 to Asp-196. An a protein-binding site is contributed by Gln-144. Residue Arg-220 coordinates L-glutamate. Thr-241–Asn-242 is a binding site for ATP. Position 259 (Lys-259) interacts with L-glutamate. Residues Asp-313, Glu-326, and Asn-328 each contribute to the Mg(2+) site. Lys-344 contacts L-glutamate. Residues Gly-391–Lys-423 form a disordered region.

The protein belongs to the tubulin polyglutamylase family. As to quaternary structure, part of the neuronal tubulin polyglutamylase complex which contains TPGS1, TPGS2, TTLL1, LRRC49 and NICN1. Interacts with PCM1, CSTPP1 and LRRC49. Mg(2+) is required as a cofactor. In terms of tissue distribution, expressed in a wide range of tissues. Has a stronger expression in heart, brain and testis.

The protein localises to the cytoplasm. It is found in the cytoskeleton. Its subcellular location is the cilium basal body. It localises to the cilium axoneme. The protein resides in the cell projection. The protein localises to the cilium. It is found in the flagellum. It carries out the reaction (L-glutamyl)(n)-gamma-L-glutamyl-L-glutamyl-[protein] + L-glutamate + ATP = (L-glutamyl)(n+1)-gamma-L-glutamyl-L-glutamyl-[protein] + ADP + phosphate + H(+). In terms of biological role, catalytic subunit of a polyglutamylase complex which modifies tubulin, generating side chains of glutamate on the gamma-carboxyl group of specific glutamate residues within the C-terminal tail of tubulin. Probably involved in the side-chain elongation step of the polyglutamylation reaction rather than the initiation step. Modifies both alpha- and beta-tubulins with a preference for the alpha-tail. Unlike most polyglutamylases of the tubulin--tyrosine ligase family, only displays a catalytic activity when in complex with other proteins as it is most likely lacking domains important for autonomous activity. Part of the neuronal tubulin polyglutamylase complex. Mediates cilia and flagella polyglutamylation which is essential for their biogenesis and motility. Involved in respiratory motile cilia function through the regulation of beating asymmetry. Essential for sperm flagella biogenesis, motility and male fertility. Involved in KLF4 glutamylation which impedes its ubiquitination, thereby leading to somatic cell reprogramming, pluripotency maintenance and embryogenesis. The sequence is that of Polyglutamylase complex subunit TTLL1 from Homo sapiens (Human).